A 336-amino-acid chain; its full sequence is Poly(A) RNA polymerase cid12 (336 aa).

2 residues coordinate Mg(2+): Asp77 and Asp79. Positions 209 to 263 constitute a PAP-associated domain; it reads ALLQKFFYFWGVEWTYELFVLRPLTGQIVPKLQKGWLNEVQPNLLSIEDPIDRNN. The residue at position 325 (Ser325) is a Phosphoserine. Thr327 is modified (phosphothreonine). A Phosphoserine modification is found at Ser329.

This sequence belongs to the DNA polymerase type-B-like family. Cid12, hrr1 and rdp1 interact forming the RNA-directed RNA polymerase complex (RDRC). The RDRC complex interacts with the RITS complex via interaction between ago1 and hrr1. Clr4 has a role in mediating this interaction. Requires Mg(2+) as cofactor. The cofactor is Mn(2+).

It localises to the cytoplasm. The protein localises to the nucleus. The enzyme catalyses RNA(n) + ATP = RNA(n)-3'-adenine ribonucleotide + diphosphate. Has a role in the RNA interference (RNAi) pathway which is important for heterochromatin formation and accurate chromosome segregation. A member of the RNA-directed RNA polymerase complex (RDRC) which is involved in the generation of small interfering RNAs (siRNAs) and mediate their association with the RNA-induced transcriptional silencing (RITS) complex. RITS acts as a priming complex for dsRNA synthesis at the site of non-coding centromeric RNA. This is Poly(A) RNA polymerase cid12 (cid12) from Schizosaccharomyces pombe (strain 972 / ATCC 24843) (Fission yeast).